The following is a 293-amino-acid chain: Methylsterol monooxygenase 1 (293 aa).

2 helical membrane-spanning segments follow: residues 55–75 (LIVH…FQFI) and 100–120 (VLLF…YYFT). The 130-residue stretch at 145-274 (CAVIEDTWHY…FTWWDRIFGT (130 aa)) folds into the Fatty acid hydroxylase domain. A Histidine box-1 motif is present at residues 157–161 (HRLLH). Residues 170 to 174 (HKIHH) carry the Histidine box-2 motif. The chain crosses the membrane as a helical span at residues 199 to 219 (FFIGIMLLCDHVILLWAWVTV). The Histidine box-3 motif lies at 249-255 (HHDFHHM).

This sequence belongs to the sterol desaturase family. The cofactor is Fe cation. Ubiquitinated by MARCHF6, leading to proteasomal degradation.

It is found in the endoplasmic reticulum membrane. It carries out the reaction 4,4-dimethyl-5alpha-cholest-7-en-3beta-ol + 6 Fe(II)-[cytochrome b5] + 3 O2 + 5 H(+) = 4alpha-carboxy-4beta-methyl-5alpha-cholest-7-ene-3beta-ol + 6 Fe(III)-[cytochrome b5] + 4 H2O. The catalysed reaction is 4,4-dimethyl-5alpha-cholesta-8,24-dien-3beta-ol + 6 Fe(II)-[cytochrome b5] + 3 O2 + 5 H(+) = 4beta-methylzymosterol-4alpha-carboxylate + 6 Fe(III)-[cytochrome b5] + 4 H2O. The enzyme catalyses 4alpha-methylzymosterol + 6 Fe(II)-[cytochrome b5] + 3 O2 + 5 H(+) = 4alpha-carboxyzymosterol + 6 Fe(III)-[cytochrome b5] + 4 H2O. It catalyses the reaction 4alpha-methyl-5alpha-cholest-7-en-3beta-ol + 6 Fe(II)-[cytochrome b5] + 3 O2 + 5 H(+) = 4alpha-carboxy-5alpha-cholest-7-en-3beta-ol + 6 Fe(III)-[cytochrome b5] + 4 H2O. It carries out the reaction 4,4-dimethyl-5alpha-cholest-8-en-3beta-ol + 6 Fe(II)-[cytochrome b5] + 3 O2 + 5 H(+) = 4alpha-carboxy-4beta-methyl-5alpha-cholest-8-en-3beta-ol + 6 Fe(III)-[cytochrome b5] + 4 H2O. The catalysed reaction is 4alpha-methyl-5alpha-cholest-8-en-3beta-ol + 6 Fe(II)-[cytochrome b5] + 3 O2 + 5 H(+) = 4alpha-carboxy-5alpha-cholest-8-ene-3beta-ol + 6 Fe(III)-[cytochrome b5] + 4 H2O. It participates in steroid biosynthesis; zymosterol biosynthesis; zymosterol from lanosterol: step 3/6. Its pathway is steroid biosynthesis; cholesterol biosynthesis. Functionally, catalyzes the three-step monooxygenation required for the demethylation of 4,4-dimethyl and 4alpha-methylsterols, which can be subsequently metabolized to cholesterol. The sequence is that of Methylsterol monooxygenase 1 (MSMO1) from Sus scrofa (Pig).